A 56-amino-acid chain; its full sequence is Large ribosomal subunit protein bL33 (56 aa).

The protein belongs to the bacterial ribosomal protein bL33 family.

The polypeptide is Large ribosomal subunit protein bL33 (Rickettsia bellii (strain OSU 85-389)).